The chain runs to 472 residues: 2-oxoisovalerate dehydrogenase subunit alpha 1, mitochondrial (472 aa).

The transit peptide at 1–56 (MAIWFARSKTLVSSLRHNLNLSTILIKRDYSHRPIFYTTSQLSSTAYLSPFGSLRH) directs the protein to the mitochondrion. Residue 185-187 (QYR) participates in thiamine diphosphate binding. Residues S234, T239, and Q240 each contribute to the K(+) site.

The protein belongs to the BCKDHA family. In terms of assembly, heterotetramer of alpha and beta chains. Thiamine diphosphate serves as cofactor.

The protein localises to the mitochondrion matrix. It carries out the reaction N(6)-[(R)-lipoyl]-L-lysyl-[protein] + 3-methyl-2-oxobutanoate + H(+) = N(6)-[(R)-S(8)-2-methylpropanoyldihydrolipoyl]-L-lysyl-[protein] + CO2. In terms of biological role, the branched-chain alpha-keto dehydrogenase complex catalyzes the overall conversion of alpha-keto acids to acyl-CoA and CO(2). It contains multiple copies of three enzymatic components: branched-chain alpha-keto acid decarboxylase (E1), lipoamide acyltransferase (E2) and lipoamide dehydrogenase (E3). Required during sugar starvation. The sequence is that of 2-oxoisovalerate dehydrogenase subunit alpha 1, mitochondrial from Arabidopsis thaliana (Mouse-ear cress).